The chain runs to 299 residues: Protease HtpX homolog (299 aa).

2 helical membrane-spanning segments follow: residues 14-34 and 39-59; these read WLLL…VGYL and GFGG…TMIF. His-143 contacts Zn(2+). Glu-144 is an active-site residue. Residue His-147 coordinates Zn(2+). Helical transmembrane passes span 153–173 and 198–218; these read IRIS…AVMA and IILL…ATLV. Residue Glu-227 coordinates Zn(2+).

This sequence belongs to the peptidase M48B family. It depends on Zn(2+) as a cofactor.

Its subcellular location is the cell membrane. The chain is Protease HtpX homolog from Streptococcus thermophilus (strain CNRZ 1066).